A 275-amino-acid polypeptide reads, in one-letter code: Urease accessory protein UreD (275 aa).

Belongs to the UreD family. UreD, UreF and UreG form a complex that acts as a GTP-hydrolysis-dependent molecular chaperone, activating the urease apoprotein by helping to assemble the nickel containing metallocenter of UreC. The UreE protein probably delivers the nickel.

It is found in the cytoplasm. Required for maturation of urease via the functional incorporation of the urease nickel metallocenter. The sequence is that of Urease accessory protein UreD from Cereibacter sphaeroides (strain ATCC 17025 / ATH 2.4.3) (Rhodobacter sphaeroides).